Consider the following 593-residue polypeptide: DEAD-box ATP-dependent RNA helicase 18 (593 aa).

A Q motif motif is present at residues 16 to 44; sequence FSDLEPPLSGDIIEALNQSDFEFCTPVQA. The 180-residue stretch at 47–226 folds into the Helicase ATP-binding domain; sequence IPLLCSYKDV…KAGLRNPVRV (180 aa). 60 to 67 contacts ATP; sequence AATGSGKT. The short motif at 174–177 is the DEAD box element; the sequence is DEAD. Positions 264 to 411 constitute a Helicase C-terminal domain; it reads QLVDLLIKNS…ERKCSEDASD (148 aa). Residues 506–524 are compositionally biased toward basic and acidic residues; sequence QRQQNLQVRKEKRQEEKKE. The disordered stretch occupies residues 506-561; the sequence is QRQQNLQVRKEKRQEEKKEKGKRKRVDASASNDPKKASRKLTGKQRQTIQTAEDEE.

The protein belongs to the DEAD box helicase family. DDX55/SPB4 subfamily.

It carries out the reaction ATP + H2O = ADP + phosphate + H(+). This is DEAD-box ATP-dependent RNA helicase 18 (RH18) from Arabidopsis thaliana (Mouse-ear cress).